Consider the following 159-residue polypeptide: Siroheme decarboxylase beta subunit (159 aa).

152–157 is a substrate binding site; that stretch reads KTSMTY.

This sequence belongs to the Ahb/Nir family. As to quaternary structure, forms a heterodimer composed of AhbA and AhbB.

The enzyme catalyses siroheme + 2 H(+) = 12,18-didecarboxysiroheme + 2 CO2. Its pathway is porphyrin-containing compound metabolism; protoheme biosynthesis. In terms of biological role, involved in siroheme-dependent heme b biosynthesis. Catalyzes the decarboxylation of siroheme into didecarboxysiroheme. Siroheme is decarboxylated to monodecarboxysiroheme, which is in turn decarboxylated to didecarboxysiroheme. This chain is Siroheme decarboxylase beta subunit, found in Desulfovibrio desulfuricans (strain ATCC 27774 / DSM 6949 / MB).